The following is a 285-amino-acid chain: HTH-type transcriptional regulator MurR (285 aa).

The HTH rpiR-type domain occupies 1–77 (MLYLTKISNA…MALIGEYSAS (77 aa)). The segment at residues 37–56 (SRQMAKQLGISQSSIVKFAQ) is a DNA-binding region (H-T-H motif). Residues 128–268 (IIEVISKAPF…FVGLVQLNDV (141 aa)) enclose the SIS domain.

As to quaternary structure, homotetramer.

It participates in amino-sugar metabolism; N-acetylmuramate degradation [regulation]. Its function is as follows. Represses the expression of the murPQ operon involved in the uptake and degradation of N-acetylmuramic acid (MurNAc). Binds to two adjacent inverted repeats within the operator region. MurNAc 6-phosphate, the substrate of MurQ, is the specific inducer that weakens binding of MurR to the operator. In Escherichia coli (strain K12 / MC4100 / BW2952), this protein is HTH-type transcriptional regulator MurR.